Consider the following 407-residue polypeptide: Argininosuccinate synthase (407 aa).

ATP-binding positions include 12–20 and Ala-39; that span reads AFSGGLDTS. Tyr-90 and Ser-95 together coordinate L-citrulline. An ATP-binding site is contributed by Gly-120. L-aspartate contacts are provided by Thr-122, Asn-126, and Asp-127. Asn-126 contributes to the L-citrulline binding site. The L-citrulline site is built by Arg-130, Ser-181, Ser-190, Glu-266, and Tyr-278.

Belongs to the argininosuccinate synthase family. Type 1 subfamily. Homotetramer.

Its subcellular location is the cytoplasm. It catalyses the reaction L-citrulline + L-aspartate + ATP = 2-(N(omega)-L-arginino)succinate + AMP + diphosphate + H(+). Its pathway is amino-acid biosynthesis; L-arginine biosynthesis; L-arginine from L-ornithine and carbamoyl phosphate: step 2/3. The polypeptide is Argininosuccinate synthase (Nitrosospira multiformis (strain ATCC 25196 / NCIMB 11849 / C 71)).